Here is a 223-residue protein sequence, read N- to C-terminus: Urease accessory protein UreF (223 aa).

The protein belongs to the UreF family. As to quaternary structure, ureD, UreF and UreG form a complex that acts as a GTP-hydrolysis-dependent molecular chaperone, activating the urease apoprotein by helping to assemble the nickel containing metallocenter of UreC. The UreE protein probably delivers the nickel.

Its subcellular location is the cytoplasm. Its function is as follows. Required for maturation of urease via the functional incorporation of the urease nickel metallocenter. The chain is Urease accessory protein UreF from Mesorhizobium japonicum (strain LMG 29417 / CECT 9101 / MAFF 303099) (Mesorhizobium loti (strain MAFF 303099)).